We begin with the raw amino-acid sequence, 436 residues long: Protein VHS2 (436 aa).

The interval 1 to 34 (MDTSNHNQDHDSHVAAQRENDNNYMPPSPSMSES) is disordered. The segment covering 7-21 (NQDHDSHVAAQREND) has biased composition (basic and acidic residues). Phosphoserine occurs at positions 53, 61, 102, and 172. 4 disordered regions span residues 165-195 (RALG…DHGS), 211-266 (NNNN…HMNF), 282-360 (NNAN…EEDN), and 389-436 (NDNH…DTTK). The span at 171-183 (RSLSSQSFDNETS) shows a compositional bias: polar residues. Composition is skewed to low complexity over residues 211-226 (NNNN…STAN), 238-261 (SFSS…ASPP), and 282-299 (NNAN…AALS). Residues Ser299, Ser301, Ser303, and Ser325 each carry the phosphoserine modification. Residues 300-312 (RSPSNQQYLLKQQ) are compositionally biased toward polar residues. Residues 401–436 (TINNNIKNSPAFTNSNPSSKSNSNSTITSMNPDTTK) are compositionally biased toward low complexity.

It to yeast MFL3.

The protein localises to the cytoplasm. In terms of biological role, can suppress the synthetic lethality of the hal3 sit4 double mutation when overexpressed, suggesting that it is involved in the G1-S transition. This chain is Protein VHS2 (VHS2), found in Saccharomyces cerevisiae (strain ATCC 204508 / S288c) (Baker's yeast).